The primary structure comprises 486 residues: MEVTAHYIGGKPFVGDTGESFATLNPATGEVLAHIEQADERVLAHAIESAKLGFSVWSSMSAAERSRCLLKAAQLIRDHNDELAELEVRDTGKPIQEASVVDIATGADVIEYFAGLVNGLGGEQQSLGSNQFFYTRREPLGICAGIGAWNYPIQIAMWKAAPALAAGNAMIFKPSEETPLSALKLAELFTQAGVPDGVFNVVQGDYRVGQMLTAHPEIAKVSFTGESGTGKKVMADSAATLKPVTMELGGKSPLIIFDDADLDDAVSAAMVANFYTQGEVCTHGTRVYVQRAMYDAFVEQLKERTEKLIVGDPMNMETQIGSLISKSHLEKVLGAISSAKESGATLLTGGFQVTERGLEKGCFVAPTVFVDCRDEMPHVQNEIFGPVMSVLVFDDEDEVIARANNTQYGLAAGVFTQNLSKAHRVIHQLQAGICWINTWGNSPAEMPVGGYKLSGIGRENGQETLLHYTQTKSVFVELGAFDSPYA.

Positions 23 and 90 each coordinate K(+). 147–149 (GAW) serves as a coordination point for NAD(+). The active-site Charge relay system is lysine 159. Residues 173–176 (KPSE) and 226–229 (ESGT) contribute to the NAD(+) site. Leucine 241 lines the K(+) pocket. The active-site Proton acceptor is the glutamate 247. NAD(+) is bound by residues glycine 249, cysteine 281, and glutamate 382. Cysteine 281 acts as the Nucleophile in catalysis. Cysteine 281 carries the cysteine sulfenic acid (-SOH) modification. 2 residues coordinate K(+): lysine 452 and glycine 455. The Charge relay system role is filled by glutamate 459.

It belongs to the aldehyde dehydrogenase family. Dimer of dimers. K(+) is required as a cofactor.

The catalysed reaction is betaine aldehyde + NAD(+) + H2O = glycine betaine + NADH + 2 H(+). Its pathway is amine and polyamine biosynthesis; betaine biosynthesis via choline pathway; betaine from betaine aldehyde: step 1/1. In terms of biological role, involved in the biosynthesis of the osmoprotectant glycine betaine. Catalyzes the irreversible oxidation of betaine aldehyde to the corresponding acid. The chain is Betaine aldehyde dehydrogenase from Vibrio vulnificus (strain YJ016).